A 152-amino-acid chain; its full sequence is UPF0178 protein YaiI (152 aa).

This sequence belongs to the UPF0178 family.

This Escherichia coli O6:K15:H31 (strain 536 / UPEC) protein is UPF0178 protein YaiI.